Consider the following 196-residue polypeptide: GTP cyclohydrolase 1 (196 aa).

Zn(2+) is bound by residues C84, H87, and C157.

Belongs to the GTP cyclohydrolase I family. Toroid-shaped homodecamer, composed of two pentamers of five dimers.

It catalyses the reaction GTP + H2O = 7,8-dihydroneopterin 3'-triphosphate + formate + H(+). It participates in cofactor biosynthesis; 7,8-dihydroneopterin triphosphate biosynthesis; 7,8-dihydroneopterin triphosphate from GTP: step 1/1. The protein is GTP cyclohydrolase 1 of Corynebacterium glutamicum (strain ATCC 13032 / DSM 20300 / JCM 1318 / BCRC 11384 / CCUG 27702 / LMG 3730 / NBRC 12168 / NCIMB 10025 / NRRL B-2784 / 534).